A 692-amino-acid polypeptide reads, in one-letter code: Elongation factor G (692 aa).

The tr-type G domain occupies 8–283; the sequence is DHVRNIGIMA…AVVDYFPSPS (276 aa). GTP-binding positions include 17–24, 81–85, and 135–138; these read AHIDAGKT, DTPGH, and NKMD.

This sequence belongs to the TRAFAC class translation factor GTPase superfamily. Classic translation factor GTPase family. EF-G/EF-2 subfamily.

The protein resides in the cytoplasm. Catalyzes the GTP-dependent ribosomal translocation step during translation elongation. During this step, the ribosome changes from the pre-translocational (PRE) to the post-translocational (POST) state as the newly formed A-site-bound peptidyl-tRNA and P-site-bound deacylated tRNA move to the P and E sites, respectively. Catalyzes the coordinated movement of the two tRNA molecules, the mRNA and conformational changes in the ribosome. This is Elongation factor G from Magnetococcus marinus (strain ATCC BAA-1437 / JCM 17883 / MC-1).